The chain runs to 372 residues: Alpha-parvin (372 aa).

The segment at Met-1–Gly-31 is disordered. The residue at position 2 (Ala-2) is an N-acetylalanine. 3 positions are modified to phosphoserine: Ser-8, Ser-14, and Ser-19. The interval Pro-21–Lys-25 is interaction with ARHGAP31. Ser-28 and Ser-62 each carry phosphoserine. 2 consecutive Calponin-homology (CH) domains span residues Gln-95 to Arg-202 and Asn-262 to Arg-369. Residues Gly-223–Glu-372 are required for interaction with TESK1 and ILK.

This sequence belongs to the parvin family. As to quaternary structure, component of the heterotrimeric IPP (ILK-PINCH-PARVIN) complex composed of ILK, LIMS1/PINCH and PARVA; the complex binds to F-actin via the C-terminal tail of LIMS1 and the N-terminal region of PARVA, promoting F-actin filament bundling. Interacts with TGFB1I1. Interacts with ARHGAP31. Interacts with the actin cytoskeleton. Interacts (via C-terminus) with TESK1 (via C-terminus); the interaction inhibits TESK1 kinase activity. Interacts with PXN/PAXILLIN (via LD motif 4).

Its subcellular location is the cell junction. It is found in the focal adhesion. The protein localises to the cell membrane. It localises to the cytoplasm. The protein resides in the cytoskeleton. Its subcellular location is the myofibril. It is found in the sarcomere. The protein localises to the z line. In terms of biological role, plays a role in sarcomere organization and in smooth muscle cell contraction. Required for normal development of the embryonic cardiovascular system, and for normal septation of the heart outflow tract. Plays a role in sprouting angiogenesis and is required for normal adhesion of vascular smooth muscle cells to endothelial cells during blood vessel development. Plays a role in the reorganization of the actin cytoskeleton, formation of lamellipodia and ciliogenesis. Plays a role in the establishment of cell polarity, cell adhesion, cell spreading, and directed cell migration. Within the IPP (ILK-PINCH-PARVIN) complex, binds to F-actin, promoting F-actin bundling, a process required to generate force for actin cytoskeleton reorganization and subsequent dynamic cell adhesion events such as cell spreading and migration. This is Alpha-parvin (Parva) from Mus musculus (Mouse).